A 208-amino-acid chain; its full sequence is Pyridoxine/pyridoxamine 5'-phosphate oxidase (208 aa).

Residues 55-60, 70-71, lysine 76, lysine 77, and glutamine 99 contribute to the FMN site; these read RMVLLK and YT. A substrate-binding site is contributed by lysine 60. 3 residues coordinate substrate: tyrosine 117, arginine 121, and serine 125. FMN-binding positions include 134 to 135 and tryptophan 179; that span reads QS. 185-187 serves as a coordination point for substrate; sequence RLH. Arginine 189 contacts FMN.

The protein belongs to the pyridoxamine 5'-phosphate oxidase family. In terms of assembly, homodimer. Requires FMN as cofactor.

The enzyme catalyses pyridoxamine 5'-phosphate + O2 + H2O = pyridoxal 5'-phosphate + H2O2 + NH4(+). It carries out the reaction pyridoxine 5'-phosphate + O2 = pyridoxal 5'-phosphate + H2O2. The protein operates within cofactor metabolism; pyridoxal 5'-phosphate salvage; pyridoxal 5'-phosphate from pyridoxamine 5'-phosphate: step 1/1. It functions in the pathway cofactor metabolism; pyridoxal 5'-phosphate salvage; pyridoxal 5'-phosphate from pyridoxine 5'-phosphate: step 1/1. Its function is as follows. Catalyzes the oxidation of either pyridoxine 5'-phosphate (PNP) or pyridoxamine 5'-phosphate (PMP) into pyridoxal 5'-phosphate (PLP). The polypeptide is Pyridoxine/pyridoxamine 5'-phosphate oxidase (Brucella ovis (strain ATCC 25840 / 63/290 / NCTC 10512)).